The chain runs to 265 residues: U6 snRNA phosphodiesterase 1 (265 aa).

Residues 1-67 (MSAAPLVGYS…EGPVDDSAKH (67 aa)) are disordered. Positions 20–32 (AGARVRPGAEGRS) are enriched in basic and acidic residues. His-120 (proton acceptor) is an active-site residue. 120–122 (HLS) is a binding site for AMP. UMP contacts are provided by residues Gln-164, Tyr-202, and 206–210 (SFHIS). AMP is bound by residues Tyr-202 and 204–210 (DPSFHIS). His-208 functions as the Proton donor in the catalytic mechanism.

The protein belongs to the 2H phosphoesterase superfamily. USB1 family. As to quaternary structure, interacts with PLRG1, CDC5L and PRPF19.

It localises to the nucleus. The enzyme catalyses a 3'-end uridylyl-uridine-RNA = a 3'-end 2',3'-cyclophospho-uridine-RNA + uridine. It catalyses the reaction a 3'-end uridylyl-adenosine-RNA = a 3'-end 2',3'-cyclophospho-uridine-RNA + adenosine. In terms of biological role, 3'-5' RNA exonuclease that trims the 3' end of oligo(U) and oligo(A) tracts of the pre-U6 small nuclear RNA (snRNA) molecule, leading to the formation of a mature U6 snRNA 3' end-terminated with a 2',3'-cyclic phosphate. Participates in the U6 snRNA 3' end processing that prevents U6 snRNA degradation. In addition also removes uridines from the 3' end of U6atac snRNA and possibly the vault RNA VTRNA1-1. In Bos taurus (Bovine), this protein is U6 snRNA phosphodiesterase 1.